The sequence spans 400 residues: S-adenosylmethionine sensor upstream of mTORC1 (400 aa).

Arg99, Gly168, Asp186, Asp198, Phe199, and Ser240 together coordinate S-adenosyl-L-methionine.

Belongs to the BMT2/SAMTOR family. As to quaternary structure, interacts with the GATOR1 complex; interaction is disrupted when samtor binds S-adenosyl-L-methionine. Interacts with the KICSTOR complex; interaction is disrupted when samtor binds S-adenosyl-L-methionine.

Functionally, S-adenosyl-L-methionine-binding protein that acts as an inhibitor of mTORC1 signaling via interaction with the GATOR1 and KICSTOR complexes. Acts as a sensor of S-adenosyl-L-methionine to signal methionine sufficiency to mTORC1: in presence of methionine, binds S-adenosyl-L-methionine, leading to disrupt interaction with the GATOR1 and KICSTOR complexes and promote mTORC1 signaling. Upon methionine starvation, S-adenosyl-L-methionine levels are reduced, thereby promoting the association with GATOR1 and KICSTOR, leading to inhibit mTORC1 signaling. Probably also acts as a S-adenosyl-L-methionine-dependent methyltransferase. The protein is S-adenosylmethionine sensor upstream of mTORC1 of Xenopus tropicalis (Western clawed frog).